Here is a 340-residue protein sequence, read N- to C-terminus: MYNTDVVIIGAGPVGLFAVFQAGMLGMKCHVIDAQEVIGGQCITLYPEKPIYDIPAYPKIAAEELIKQLALQAAPFNPIYHLNQQAIELNKQDDFFEIKTSKNTLIKSKVIIIAAGAGSFGPNKPPLANIEDFESKSVFYFINDKSKFAGKNIVIAGGGDSAVDWAISLSDIANKIYLVHRRDKFTAAPESVRQLRHIAETDKIELITGYQLNALDGNNSELQSVIVKDLQNNTRKLDANILLPFFGLKQDLGSLANWGLNVKLHHIEVDSSYYQTNIEGIYAIGDIAHYVGKLKLILTGFAEAASSLHHAYSRVFDGKALHFEYSTTKNTGKRSKSVTK.

Residues Asp-33, Gln-41, Tyr-46, Ala-86, Phe-120, Asp-286, and Thr-327 each contribute to the FAD site.

Belongs to the ferredoxin--NADP reductase type 2 family. In terms of assembly, homodimer. FAD serves as cofactor.

The enzyme catalyses 2 reduced [2Fe-2S]-[ferredoxin] + NADP(+) + H(+) = 2 oxidized [2Fe-2S]-[ferredoxin] + NADPH. The sequence is that of Ferredoxin--NADP reductase from Rickettsia conorii (strain ATCC VR-613 / Malish 7).